The sequence spans 498 residues: Probable dipeptidase B (498 aa).

C26 is an active-site residue.

Belongs to the peptidase C69 family.

The enzyme catalyses an L-aminoacyl-L-amino acid + H2O = 2 an L-alpha-amino acid. This is Probable dipeptidase B (pepDB) from Streptococcus pyogenes serotype M1.